We begin with the raw amino-acid sequence, 238 residues long: Dephospho-CoA kinase (238 aa).

Positions 3–233 constitute a DPCK domain; the sequence is IIGLTGGVGT…QRPFASPPRA (231 aa). Position 11-16 (11-16) interacts with ATP; sequence GTGKST. 2 disordered regions span residues 110–129 and 219–238; these read HGVP…VGFS and LASA…YSDG.

This sequence belongs to the CoaE family.

It localises to the cytoplasm. It carries out the reaction 3'-dephospho-CoA + ATP = ADP + CoA + H(+). It functions in the pathway cofactor biosynthesis; coenzyme A biosynthesis; CoA from (R)-pantothenate: step 5/5. In terms of biological role, catalyzes the phosphorylation of the 3'-hydroxyl group of dephosphocoenzyme A to form coenzyme A. The polypeptide is Dephospho-CoA kinase (Synechococcus sp. (strain JA-2-3B'a(2-13)) (Cyanobacteria bacterium Yellowstone B-Prime)).